A 309-amino-acid chain; its full sequence is Ribosomal RNA small subunit methyltransferase H (309 aa).

Residues 33–35 (GGH), Asp53, Phe79, Asp100, and Gln107 contribute to the S-adenosyl-L-methionine site.

This sequence belongs to the methyltransferase superfamily. RsmH family.

It localises to the cytoplasm. It catalyses the reaction cytidine(1402) in 16S rRNA + S-adenosyl-L-methionine = N(4)-methylcytidine(1402) in 16S rRNA + S-adenosyl-L-homocysteine + H(+). Functionally, specifically methylates the N4 position of cytidine in position 1402 (C1402) of 16S rRNA. The protein is Ribosomal RNA small subunit methyltransferase H of Clostridium botulinum (strain Loch Maree / Type A3).